A 169-amino-acid polypeptide reads, in one-letter code: uncharacterized protein (169 aa).

The helical transmembrane segment at 55-77 threads the bilayer; sequence SLFIFKAVMILHTCLIVKSIRIF.

It localises to the membrane. This is an uncharacterized protein from Saccharomyces cerevisiae (strain ATCC 204508 / S288c) (Baker's yeast).